The chain runs to 256 residues: 5-keto-4-deoxy-D-glucarate aldolase (256 aa).

H50 serves as the catalytic Proton acceptor. Q151 contacts substrate. E153 contributes to the Mg(2+) binding site. Substrate-binding residues include S178 and D179. Residue D179 participates in Mg(2+) binding.

It belongs to the HpcH/HpaI aldolase family. KDGluc aldolase subfamily. In terms of assembly, homohexamer; trimer of dimers. The cofactor is Mg(2+).

The enzyme catalyses 5-dehydro-4-deoxy-D-glucarate = 2-hydroxy-3-oxopropanoate + pyruvate. It catalyses the reaction 2-dehydro-3-deoxy-D-glucarate = 2-hydroxy-3-oxopropanoate + pyruvate. It functions in the pathway carbohydrate acid metabolism; galactarate degradation; D-glycerate from galactarate: step 2/3. Its function is as follows. Catalyzes the reversible retro-aldol cleavage of both 5-keto-4-deoxy-D-glucarate and 2-keto-3-deoxy-D-glucarate to pyruvate and tartronic semialdehyde. The chain is 5-keto-4-deoxy-D-glucarate aldolase from Salmonella agona (strain SL483).